The primary structure comprises 293 residues: Beta-lactamase (293 aa).

The first 27 residues, 1 to 27, serve as a signal peptide directing secretion; it reads MRFTATVLSRVATGLALGLSMATASLA. Catalysis depends on serine 74, which acts as the Acyl-ester intermediate. 238–240 is a substrate binding site; the sequence is KSG.

Belongs to the class-A beta-lactamase family.

The protein resides in the periplasm. The enzyme catalyses a beta-lactam + H2O = a substituted beta-amino acid. Hydrolyzes beta-lactams antibiotics. Rates of hydrolysis relative to benzylpenicillin =100: ampicillin = 27, carbenicillin = 25, cloxacillin = 0, cephaloridine = 4. This Rhodobacter capsulatus (Rhodopseudomonas capsulata) protein is Beta-lactamase.